A 556-amino-acid chain; its full sequence is Dihydroxy-acid dehydratase (556 aa).

Cysteine 47 contacts [2Fe-2S] cluster. A Mg(2+)-binding site is contributed by aspartate 79. A [2Fe-2S] cluster-binding site is contributed by cysteine 120. Residues aspartate 121 and lysine 122 each coordinate Mg(2+). Lysine 122 carries the N6-carboxylysine modification. Cysteine 192 is a binding site for [2Fe-2S] cluster. Glutamate 444 contributes to the Mg(2+) binding site. The active-site Proton acceptor is serine 470.

The protein belongs to the IlvD/Edd family. In terms of assembly, homodimer. It depends on [2Fe-2S] cluster as a cofactor. Mg(2+) serves as cofactor.

The catalysed reaction is (2R)-2,3-dihydroxy-3-methylbutanoate = 3-methyl-2-oxobutanoate + H2O. It carries out the reaction (2R,3R)-2,3-dihydroxy-3-methylpentanoate = (S)-3-methyl-2-oxopentanoate + H2O. It functions in the pathway amino-acid biosynthesis; L-isoleucine biosynthesis; L-isoleucine from 2-oxobutanoate: step 3/4. It participates in amino-acid biosynthesis; L-valine biosynthesis; L-valine from pyruvate: step 3/4. Its function is as follows. Functions in the biosynthesis of branched-chain amino acids. Catalyzes the dehydration of (2R,3R)-2,3-dihydroxy-3-methylpentanoate (2,3-dihydroxy-3-methylvalerate) into 2-oxo-3-methylpentanoate (2-oxo-3-methylvalerate) and of (2R)-2,3-dihydroxy-3-methylbutanoate (2,3-dihydroxyisovalerate) into 2-oxo-3-methylbutanoate (2-oxoisovalerate), the penultimate precursor to L-isoleucine and L-valine, respectively. This Prochlorococcus marinus (strain MIT 9303) protein is Dihydroxy-acid dehydratase.